The following is a 125-amino-acid chain: Large ribosomal subunit protein bL12 (125 aa).

It belongs to the bacterial ribosomal protein bL12 family. Homodimer. Part of the 50S ribosomal subunit; present in 6 copies per ribosome. Forms part of the ribosomal stalk which helps the ribosome interact with GTP-bound translation factors. Forms a heptameric L10(L12)2(L12)2(L12)2 complex, where L10 forms an elongated spine to which 3 L12 dimers bind in a sequential fashion.

Functionally, forms part of the ribosomal stalk which helps the ribosome interact with GTP-bound translation factors. Is thus essential for accurate translation. The protein is Large ribosomal subunit protein bL12 of Agrobacterium fabrum (strain C58 / ATCC 33970) (Agrobacterium tumefaciens (strain C58)).